A 392-amino-acid polypeptide reads, in one-letter code: Formate-dependent phosphoribosylglycinamide formyltransferase (392 aa).

Residues 20 to 21 and glutamate 80 contribute to the N(1)-(5-phospho-beta-D-ribosyl)glycinamide site; that span reads EL. ATP-binding positions include arginine 112, lysine 153, 158–163, 193–196, and glutamate 201; these read SSGKGQ and EGFI. In terms of domain architecture, ATP-grasp spans 117-306; it reads RLAAETLALP…EFALHVRAIL (190 aa). Mg(2+)-binding residues include glutamate 265 and glutamate 277. Residues aspartate 284, lysine 354, and 361 to 362 each bind N(1)-(5-phospho-beta-D-ribosyl)glycinamide; that span reads RR.

It belongs to the PurK/PurT family. In terms of assembly, homodimer.

The catalysed reaction is N(1)-(5-phospho-beta-D-ribosyl)glycinamide + formate + ATP = N(2)-formyl-N(1)-(5-phospho-beta-D-ribosyl)glycinamide + ADP + phosphate + H(+). Its pathway is purine metabolism; IMP biosynthesis via de novo pathway; N(2)-formyl-N(1)-(5-phospho-D-ribosyl)glycinamide from N(1)-(5-phospho-D-ribosyl)glycinamide (formate route): step 1/1. In terms of biological role, involved in the de novo purine biosynthesis. Catalyzes the transfer of formate to 5-phospho-ribosyl-glycinamide (GAR), producing 5-phospho-ribosyl-N-formylglycinamide (FGAR). Formate is provided by PurU via hydrolysis of 10-formyl-tetrahydrofolate. The chain is Formate-dependent phosphoribosylglycinamide formyltransferase from Shewanella amazonensis (strain ATCC BAA-1098 / SB2B).